A 161-amino-acid polypeptide reads, in one-letter code: Phosphopantetheine adenylyltransferase (161 aa).

Residue S9 coordinates substrate. Residues S9–F10 and H17 contribute to the ATP site. The substrate site is built by K41, L73, and K87. Residues G88 to R90, E98, and Y123 to S129 each bind ATP.

The protein belongs to the bacterial CoaD family. Homohexamer. It depends on Mg(2+) as a cofactor.

It localises to the cytoplasm. The enzyme catalyses (R)-4'-phosphopantetheine + ATP + H(+) = 3'-dephospho-CoA + diphosphate. It functions in the pathway cofactor biosynthesis; coenzyme A biosynthesis; CoA from (R)-pantothenate: step 4/5. In terms of biological role, reversibly transfers an adenylyl group from ATP to 4'-phosphopantetheine, yielding dephospho-CoA (dPCoA) and pyrophosphate. In Clostridium novyi (strain NT), this protein is Phosphopantetheine adenylyltransferase.